We begin with the raw amino-acid sequence, 376 residues long: Alpha-2,8-sialyltransferase 8E (376 aa).

The helical transmembrane segment at 17–37 threads the bilayer; it reads TLLFIFICAFALVTLLQQILY. N-linked (GlcNAc...) asparagine glycosylation occurs at Asn-56. 2 disulfide bridges follow: Cys-164-Cys-313 and Cys-178-Cys-373. Residues Asn-192 and 214 to 216 contribute to the substrate site; that span reads NPS. Residue Asn-241 is glycosylated (N-linked (GlcNAc...) asparagine). 300-302 contacts substrate; it reads STG. Residue His-348 is the Proton donor/acceptor of the active site.

The protein belongs to the glycosyltransferase 29 family. Expressed in liver.

It is found in the golgi apparatus membrane. The catalysed reaction is a ganglioside GT1b (d18:1(4E)) + CMP-N-acetyl-beta-neuraminate = a ganglioside GQ1b (d18:1(4E)) + CMP + H(+). It carries out the reaction a ganglioside GQ1c (d18:1(4E)) + CMP-N-acetyl-beta-neuraminate = a ganglioside GP1c (d18:1(4E)) + CMP + H(+). The enzyme catalyses a ganglioside GD3 (d18:1(4E)) + CMP-N-acetyl-beta-neuraminate = a ganglioside GT3 (d18:1(4E)) + CMP + H(+). It catalyses the reaction a ganglioside GD1a (d18:1(4E)) + CMP-N-acetyl-beta-neuraminate = a ganglioside GT1a (d18:1(4E)) + CMP + H(+). The catalysed reaction is a ganglioside GM1b (d18:1(4E)) + CMP-N-acetyl-beta-neuraminate = a ganglioside GD1c (d18:1(4E)) + CMP + H(+). It participates in protein modification; protein glycosylation. Its function is as follows. Involved in the synthesis of gangliosides GD1c, GT1a, GQ1b, GP1c and GT3 from GD1a, GT1b, GM1b and GD3 respectively. The chain is Alpha-2,8-sialyltransferase 8E from Rattus norvegicus (Rat).